The primary structure comprises 750 residues: Photosystem I P700 chlorophyll a apoprotein A1 (750 aa).

The next 8 membrane-spanning stretches (helical) occupy residues 70-93 (VFSA…FHGA), 156-179 (LYCT…FHYH), 195-219 (LNHH…HVSL), 291-309 (IAHH…GHMY), 346-369 (WHAQ…HHMY), 385-411 (LSLF…IFMV), 433-455 (AIIS…LYIH), and 531-549 (FLVH…LILL). [4Fe-4S] cluster is bound by residues cysteine 573 and cysteine 582. 2 helical membrane passes run 589-610 (HVFL…HFSW) and 664-686 (LSAY…MFLF). Histidine 675 contacts chlorophyll a'. Residues methionine 683 and tyrosine 691 each coordinate chlorophyll a. Residue tryptophan 692 coordinates phylloquinone. A helical transmembrane segment spans residues 724 to 744 (AVGVTHYLLGGIATTWAFFLA).

Belongs to the PsaA/PsaB family. As to quaternary structure, the PsaA/B heterodimer binds the P700 chlorophyll special pair and subsequent electron acceptors. PSI consists of a core antenna complex that captures photons, and an electron transfer chain that converts photonic excitation into a charge separation. The eukaryotic PSI reaction center is composed of at least 11 subunits. P700 is a chlorophyll a/chlorophyll a' dimer, A0 is one or more chlorophyll a, A1 is one or both phylloquinones and FX is a shared 4Fe-4S iron-sulfur center. is required as a cofactor.

It is found in the plastid. Its subcellular location is the chloroplast thylakoid membrane. It catalyses the reaction reduced [plastocyanin] + hnu + oxidized [2Fe-2S]-[ferredoxin] = oxidized [plastocyanin] + reduced [2Fe-2S]-[ferredoxin]. In terms of biological role, psaA and PsaB bind P700, the primary electron donor of photosystem I (PSI), as well as the electron acceptors A0, A1 and FX. PSI is a plastocyanin-ferredoxin oxidoreductase, converting photonic excitation into a charge separation, which transfers an electron from the donor P700 chlorophyll pair to the spectroscopically characterized acceptors A0, A1, FX, FA and FB in turn. Oxidized P700 is reduced on the lumenal side of the thylakoid membrane by plastocyanin. This is Photosystem I P700 chlorophyll a apoprotein A1 from Nicotiana sylvestris (Wood tobacco).